The primary structure comprises 333 residues: Taste receptor type 2 member 123 (333 aa).

Residues Met1–Thr13 lie on the Extracellular side of the membrane. Residue Asn7 is glycosylated (N-linked (GlcNAc...) asparagine). Residues Phe14–Leu34 traverse the membrane as a helical segment. At Val35 to Arg60 the chain is on the cytoplasmic side. The helical transmembrane segment at Phe61–Pro81 threads the bilayer. Residues Arg82–Met90 lie on the Extracellular side of the membrane. A helical membrane pass occupies residues Gly91–Phe111. At Tyr112–Val134 the chain is on the cytoplasmic side. Residues Ile135 to Ile155 traverse the membrane as a helical segment. At Tyr156–Ser205 the chain is on the extracellular side. Asn167, Asn186, and Asn195 each carry an N-linked (GlcNAc...) asparagine glycan. The helical transmembrane segment at Leu206 to Leu226 threads the bilayer. Topologically, residues Trp227 to Gln253 are cytoplasmic. A helical transmembrane segment spans residues Thr254–Leu274. Over Asn275–Lys281 the chain is Extracellular. A helical membrane pass occupies residues Ile282–Val302. The Cytoplasmic portion of the chain corresponds to Leu303–Leu333.

It belongs to the G-protein coupled receptor T2R family. Expressed in subsets of taste receptor cells of the tongue and palate epithelium and exclusively in gustducin-positive cells. Expressed in the duodenum, antrum and fundus (part of the stomach).

It is found in the membrane. In terms of biological role, gustducin-coupled receptor implicated in the perception of bitter compounds in the oral cavity and the gastrointestinal tract. Signals through PLCB2 and the calcium-regulated cation channel TRPM5. This Mus musculus (Mouse) protein is Taste receptor type 2 member 123 (Tas2r123).